A 522-amino-acid polypeptide reads, in one-letter code: uncharacterized protein (522 aa).

Residues 1-11 (MSSITSRVSSR) show a composition bias toward low complexity. The disordered stretch occupies residues 1 to 20 (MSSITSRVSSRSSHELTEKK). 12 consecutive transmembrane segments (helical) span residues 69–89 (VLWK…MIQY), 116–136 (SMTT…AILM), 141–161 (LSYF…LMAA), 173–193 (FLAG…TAMW), 204–224 (LCWY…SYGL), 236–256 (YVFI…VFIP), 303–323 (VIMI…GVFS), 338–358 (AVLN…SGVL), 367–387 (LLIG…IWKI), 396–416 (LVGV…LSLI), 428–448 (VTSA…PQLF), and 462–482 (AMIV…GYYI).

The protein belongs to the major facilitator superfamily. Allantoate permease family.

It localises to the endoplasmic reticulum. It is found in the membrane. This is an uncharacterized protein from Schizosaccharomyces pombe (strain 972 / ATCC 24843) (Fission yeast).